The primary structure comprises 355 residues: Inner membrane protein YghQ (355 aa).

The Periplasmic segment spans residues 1–37 (MAGFNIKHWFADGAFRTIIRNSAWLGSSNVVSALLGL). The helical transmembrane segment at 38–58 (LALSCAGKGMTPAMFGVLVIV) threads the bilayer. The Cytoplasmic portion of the chain corresponds to 59–100 (QSYAKSISDFIKFQTWQLVVQYGTPALTNNNPQQFRNVVSFS). A helical transmembrane segment spans residues 101–121 (FSLDIVSGAVAIVGGIALLPF). Residues 122 to 134 (LSHSLGLDDQSFW) are Periplasmic-facing. A helical membrane pass occupies residues 135–155 (LAALYCTLIPSMASSTPTGIL). Residues 156–177 (RAVDRFDLIAVQQATKPFLRAA) are Cytoplasmic-facing. A helical membrane pass occupies residues 178-198 (GSVVAWYFDFGFAGFVIAWYV). Topologically, residues 199 to 261 (SNLVGGTMYW…WSARNSCSTV (63 aa)) are periplasmic. Residues 262–282 (LVGIVLGPAAAGLFKIAMTFF) traverse the membrane as a helical segment. Residues 283–323 (DAAGTPAGLLGKSFYPEVMRLDPRTTRPWLLGVKSGLLAGG) are Cytoplasmic-facing. A helical membrane pass occupies residues 324–344 (IGILVALAVLIVGKPLISLVF). Residues 345 to 355 (GVKYLEAYDLI) are Periplasmic-facing.

The protein resides in the cell inner membrane. This chain is Inner membrane protein YghQ (yghQ), found in Escherichia coli (strain K12).